The chain runs to 148 residues: Small ribosomal subunit protein eS12B (148 aa).

It belongs to the eukaryotic ribosomal protein eS12 family. As to quaternary structure, component of the small ribosomal subunit (SSU). Mature yeast ribosomes consist of a small (40S) and a large (60S) subunit. The 40S small subunit contains 1 molecule of ribosomal RNA (18S rRNA) and at least 33 different proteins. The large 60S subunit contains 3 rRNA molecules (25S, 5.8S and 5S rRNA) and at least 46 different proteins.

It localises to the cytoplasm. Functionally, component of the ribosome, a large ribonucleoprotein complex responsible for the synthesis of proteins in the cell. The small ribosomal subunit (SSU) binds messenger RNAs (mRNAs) and translates the encoded message by selecting cognate aminoacyl-transfer RNA (tRNA) molecules. The large subunit (LSU) contains the ribosomal catalytic site termed the peptidyl transferase center (PTC), which catalyzes the formation of peptide bonds, thereby polymerizing the amino acids delivered by tRNAs into a polypeptide chain. The nascent polypeptides leave the ribosome through a tunnel in the LSU and interact with protein factors that function in enzymatic processing, targeting, and the membrane insertion of nascent chains at the exit of the ribosomal tunnel. The chain is Small ribosomal subunit protein eS12B (rps1202) from Schizosaccharomyces pombe (strain 972 / ATCC 24843) (Fission yeast).